The primary structure comprises 69 residues: Bacteriocin microcin B17 (69 aa).

A propeptide spanning residues 1 to 26 (MELKASEFGVVLSVDALKLSRQSPLG) is cleaved from the precursor. The oxazole-4-carboxylic acid (Gly-Ser) cross-link spans 39–40 (GS). A cross-link (thiazole-4-carboxylic acid (Ser-Cys)) is located at residues 40–41 (SC). 3 cross-links (thiazole-4-carboxylic acid (Gly-Cys)) span residues 47–48 (GC), 50–51 (GC), and 54–55 (GC). The oxazole-4-carboxylic acid (Cys-Ser) cross-link spans 55–56 (CS). Cross-links (oxazole-4-carboxylic acid (Gly-Ser)) lie at residues 61-62 (GS) and 64-65 (GS).

In terms of processing, the processed N-terminus does not resemble a typical secretion signal sequence. Maturation of thiazole and oxazole containing antibiotics involves the enzymatic condensation of a Cys, Ser or Thr with the alpha-carbonyl of the preceding amino acid to form a thioether or ether bond, then dehydration to form a double bond with the alpha-amino nitrogen. Thiazoline or oxazoline rings are dehydrogenated to form thiazole or oxazole rings.

Its function is as follows. This glycine-rich peptide antibiotic inhibits DNA replication in many enteric bacteria, that leads to induction of the SOS repair system, massive DNA degradation and cell death. B17 inhibits type II topoisomerase by trapping an enzyme - DNA cleavable complex. This is Bacteriocin microcin B17 (mcbA) from Escherichia coli.